The sequence spans 334 residues: Serine/Arginine-related protein 53 (334 aa).

Basic and acidic residues predominate over residues 1–13 (MGRRSSDTEEESR). Disordered stretches follow at residues 1 to 179 (MGRR…HLPP), 201 to 220 (LKAK…EDQA), and 243 to 290 (QTFR…SIPT). Composition is skewed to basic residues over residues 14-24 (SKRKKKHRRRS) and 35-50 (YSRK…KSRS). Positions 51 to 62 (WSRDLQPRSHSY) are enriched in basic and acidic residues. The span at 78 to 118 (SRRKRSRSRSRGRGKSYRVQRSRSKSRTRRSRSRPRLRSHS) shows a compositional bias: basic residues. 3 stretches are compositionally biased toward basic and acidic residues: residues 132–166 (RSRD…KRGE), 201–218 (LKAK…KEED), and 247–259 (SSKE…EPSE). Positions 180-236 (AEQAKARLQLVLEAAAKADEALKAKERNEEEAKRRKEEDQATLVEQVKRVKEIEAIE) form a coiled coil.

As to quaternary structure, interacts (via Arg/Ser-rich domain) with LUC7L3, RBM39 and RSF1. In terms of processing, phosphorylated. In terms of tissue distribution, widely expressed. Expressed in brain, spinal cord, cerebellum.

The protein resides in the nucleus. The protein localises to the nucleus speckle. It localises to the cytoplasm. In terms of biological role, has a role in alternative splicing and transcription regulation. Involved in both constitutive and alternative pre-mRNA splicing. May have a role in the recognition of the 3' splice site during the second step of splicing. This chain is Serine/Arginine-related protein 53 (RSRC1), found in Homo sapiens (Human).